Here is a 630-residue protein sequence, read N- to C-terminus: Forkhead box protein O (630 aa).

The segment at 1 to 45 (MDGFVQEWSNLPRSDNGLHMDQLVGELPTDGGFEPQTRARSNTWP) is disordered. Position 43 is a phosphothreonine; by PKB/AKT1 (Thr43). Positions 92–198 (WGNLSYADLI…ETSRYEKRRG (107 aa)) form a DNA-binding region, fork-head. Ser187 carries the post-translational modification Phosphoserine; by PKB/AKT1. The interval 214–260 (GLNDATPSPSSSVSEGLDHFPESPLHSGGFQLSPDFRQRASSNASSC) is disordered. The segment covering 218–227 (ATPSPSSSVS) has biased composition (polar residues). Ser255 bears the Phosphoserine; by PKB/AKT1 mark. A phosphoserine mark is found at Ser258, Ser259, and Ser264. Disordered regions lie at residues 318-379 (SAAS…QQQQ) and 403-432 (TRDGLSPNSVTTTMSPAYPNSEPSSDSLNT). Low complexity-rich tracts occupy residues 332–350 (QQQQQQQQQQAQQQSQLPQ) and 367–379 (QPQAQQQQQQQQQ). Composition is skewed to polar residues over residues 408 to 417 (SPNSVTTTMS) and 423 to 432 (SEPSSDSLNT).

Interacts with melt.

Its subcellular location is the cytoplasm. It localises to the nucleus. Its function is as follows. Transcription factor involved in the regulation of the insulin signaling pathway. Consistently activates both the downstream target Thor\d4EBP and the feedback control target InR. Involved in negative regulation of the cell cycle, modulating cell growth and proliferation. In response to cellular stresses, such as nutrient deprivation or increased levels of reactive oxygen species, foxo is activated and inhibits growth through the action of target genes such as Thor. Foxo activated in the adult fat body can regulate lifespan in adults; an insulin peptide itself may function as one secondary messenger of insulin-regulated aging. Also regulates Lip4, homolog of human acid lipases, thereby acting as a key modulator of lipid metabolism by insulin signaling and integrates insulin responses to glucose and lipid homeostasis. This chain is Forkhead box protein O, found in Drosophila grimshawi (Hawaiian fruit fly).